Here is a 393-residue protein sequence, read N- to C-terminus: NAD(P)H-quinone oxidoreductase subunit H, chloroplastic (393 aa).

The protein belongs to the complex I 49 kDa subunit family. NDH is composed of at least 16 different subunits, 5 of which are encoded in the nucleus.

The protein localises to the plastid. Its subcellular location is the chloroplast thylakoid membrane. The enzyme catalyses a plastoquinone + NADH + (n+1) H(+)(in) = a plastoquinol + NAD(+) + n H(+)(out). The catalysed reaction is a plastoquinone + NADPH + (n+1) H(+)(in) = a plastoquinol + NADP(+) + n H(+)(out). Its function is as follows. NDH shuttles electrons from NAD(P)H:plastoquinone, via FMN and iron-sulfur (Fe-S) centers, to quinones in the photosynthetic chain and possibly in a chloroplast respiratory chain. The immediate electron acceptor for the enzyme in this species is believed to be plastoquinone. Couples the redox reaction to proton translocation, and thus conserves the redox energy in a proton gradient. This is NAD(P)H-quinone oxidoreductase subunit H, chloroplastic from Daucus carota (Wild carrot).